Consider the following 349-residue polypeptide: UDP-3-O-acylglucosamine N-acyltransferase (349 aa).

The Proton acceptor role is filled by His-240.

Belongs to the transferase hexapeptide repeat family. LpxD subfamily. In terms of assembly, homotrimer.

The enzyme catalyses a UDP-3-O-[(3R)-3-hydroxyacyl]-alpha-D-glucosamine + a (3R)-hydroxyacyl-[ACP] = a UDP-2-N,3-O-bis[(3R)-3-hydroxyacyl]-alpha-D-glucosamine + holo-[ACP] + H(+). It functions in the pathway bacterial outer membrane biogenesis; LPS lipid A biosynthesis. Functionally, catalyzes the N-acylation of UDP-3-O-acylglucosamine using 3-hydroxyacyl-ACP as the acyl donor. Is involved in the biosynthesis of lipid A, a phosphorylated glycolipid that anchors the lipopolysaccharide to the outer membrane of the cell. The protein is UDP-3-O-acylglucosamine N-acyltransferase of Porphyromonas gingivalis (strain ATCC 33277 / DSM 20709 / CIP 103683 / JCM 12257 / NCTC 11834 / 2561).